A 72-amino-acid polypeptide reads, in one-letter code: Large ribosomal subunit protein bL28 (72 aa).

The protein belongs to the bacterial ribosomal protein bL28 family.

This Chlorobium chlorochromatii (strain CaD3) protein is Large ribosomal subunit protein bL28.